Here is a 304-residue protein sequence, read N- to C-terminus: Dipeptide transport system permease protein DppC (304 aa).

A disordered region spans residues 1–24 (MKTEHAKPLMTPEPNSPPPEDQYT). 6 consecutive transmembrane segments (helical) span residues 41–61 (LAIV…FAPL), 108–128 (VGFF…LIAG), 141–161 (IFDI…VAIL), 164–184 (SLQN…GRLV), 227–247 (ATLG…LGLG), and 271–291 (WTVL…NMIG). Residues 102-291 (ARLSLQVGFF…LVVLGFNMIG (190 aa)) form the ABC transmembrane type-1 domain.

It belongs to the binding-protein-dependent transport system permease family. OppBC subfamily.

The protein localises to the cell membrane. In terms of biological role, probably part of the ABC transporter Dpp involved in dipeptide transport. Responsible for the translocation of the substrate across the membrane. The polypeptide is Dipeptide transport system permease protein DppC (dppC) (Alkalihalophilus pseudofirmus (strain ATCC BAA-2126 / JCM 17055 / OF4) (Bacillus pseudofirmus)).